The sequence spans 128 residues: LIM domain-containing protein 2 (128 aa).

Met1 is subject to N-acetylmethionine. Positions 1–25 (MFQAAGAAQATPSHEAKGGGSSSTV) are disordered. The LIM zinc-binding domain maps to 39–99 (ETCAACQKTV…KPHFQQLFKS (61 aa)). Zn(2+)-binding residues include Cys41, Cys44, His62, Cys65, Cys68, Cys71, Cys89, and His92.

As to quaternary structure, interacts with ILK.

The protein resides in the cytoplasm. It localises to the nucleus. Acts as an activator of the protein-kinase ILK, thereby regulating cell motility. In Bos taurus (Bovine), this protein is LIM domain-containing protein 2 (LIMD2).